The chain runs to 79 residues: Small ribosomal subunit protein bS18 (79 aa).

It belongs to the bacterial ribosomal protein bS18 family. In terms of assembly, part of the 30S ribosomal subunit. Forms a tight heterodimer with protein bS6.

Its function is as follows. Binds as a heterodimer with protein bS6 to the central domain of the 16S rRNA, where it helps stabilize the platform of the 30S subunit. This Bacillus licheniformis (strain ATCC 14580 / DSM 13 / JCM 2505 / CCUG 7422 / NBRC 12200 / NCIMB 9375 / NCTC 10341 / NRRL NRS-1264 / Gibson 46) protein is Small ribosomal subunit protein bS18.